Here is a 564-residue protein sequence, read N- to C-terminus: Laccase-22 (564 aa).

The first 25 residues, Met-1–Ser-25, serve as a signal peptide directing secretion. Plastocyanin-like domains lie at Asn-36–Gly-152 and Lys-162–Thr-314. Asn-41 and Asn-82 each carry an N-linked (GlcNAc...) asparagine glycan. Cu cation-binding residues include His-86 and His-88. Asn-118 is a glycosylation site (N-linked (GlcNAc...) asparagine). Cu cation is bound by residues His-131 and His-133. N-linked (GlcNAc...) asparagine glycosylation is found at Asn-191, Asn-302, Asn-331, Asn-379, Asn-389, Asn-424, Asn-437, and Asn-447. A Plastocyanin-like 3 domain is found at Asp-414–Lys-548. His-465, His-468, His-470, His-527, Cys-528, His-529, and His-533 together coordinate Cu cation.

It belongs to the multicopper oxidase family. Requires Cu cation as cofactor.

It localises to the secreted. It is found in the extracellular space. The protein localises to the apoplast. It carries out the reaction 4 hydroquinone + O2 = 4 benzosemiquinone + 2 H2O. In terms of biological role, lignin degradation and detoxification of lignin-derived products. In Oryza sativa subsp. japonica (Rice), this protein is Laccase-22 (LAC22).